A 376-amino-acid polypeptide reads, in one-letter code: Chorismate synthase (376 aa).

NADP(+)-binding residues include Arg39 and Arg45. FMN contacts are provided by residues 115–117 (RSS), Gly276, 291–295 (KPIPT), and Arg317.

The protein belongs to the chorismate synthase family. In terms of assembly, homotetramer. Requires FMNH2 as cofactor.

It catalyses the reaction 5-O-(1-carboxyvinyl)-3-phosphoshikimate = chorismate + phosphate. Its pathway is metabolic intermediate biosynthesis; chorismate biosynthesis; chorismate from D-erythrose 4-phosphate and phosphoenolpyruvate: step 7/7. Its function is as follows. Catalyzes the anti-1,4-elimination of the C-3 phosphate and the C-6 proR hydrogen from 5-enolpyruvylshikimate-3-phosphate (EPSP) to yield chorismate, which is the branch point compound that serves as the starting substrate for the three terminal pathways of aromatic amino acid biosynthesis. This reaction introduces a second double bond into the aromatic ring system. The protein is Chorismate synthase of Thermotoga sp. (strain RQ2).